The sequence spans 149 residues: UPF0179 protein TON_1048 (149 aa).

This sequence belongs to the UPF0179 family.

The polypeptide is UPF0179 protein TON_1048 (Thermococcus onnurineus (strain NA1)).